A 185-amino-acid polypeptide reads, in one-letter code: Adenylyl-sulfate kinase (185 aa).

13–20 contributes to the ATP binding site; the sequence is GLSGAGKT. Catalysis depends on serine 87, which acts as the Phosphoserine intermediate.

It belongs to the APS kinase family.

The catalysed reaction is adenosine 5'-phosphosulfate + ATP = 3'-phosphoadenylyl sulfate + ADP + H(+). It participates in sulfur metabolism; hydrogen sulfide biosynthesis; sulfite from sulfate: step 2/3. Its function is as follows. Catalyzes the synthesis of activated sulfate. The sequence is that of Adenylyl-sulfate kinase from Halothermothrix orenii (strain H 168 / OCM 544 / DSM 9562).